Reading from the N-terminus, the 444-residue chain is tRNA-2-methylthio-N(6)-dimethylallyladenosine synthase (444 aa).

Residues lysine 8–serine 122 enclose the MTTase N-terminal domain. [4Fe-4S] cluster is bound by residues cysteine 17, cysteine 53, cysteine 85, cysteine 160, cysteine 164, and cysteine 167. Residues arginine 146 to alanine 376 form the Radical SAM core domain. A TRAM domain is found at arginine 379–glycine 444.

It belongs to the methylthiotransferase family. MiaB subfamily. As to quaternary structure, monomer. The cofactor is [4Fe-4S] cluster.

It localises to the cytoplasm. It carries out the reaction N(6)-dimethylallyladenosine(37) in tRNA + (sulfur carrier)-SH + AH2 + 2 S-adenosyl-L-methionine = 2-methylsulfanyl-N(6)-dimethylallyladenosine(37) in tRNA + (sulfur carrier)-H + 5'-deoxyadenosine + L-methionine + A + S-adenosyl-L-homocysteine + 2 H(+). Catalyzes the methylthiolation of N6-(dimethylallyl)adenosine (i(6)A), leading to the formation of 2-methylthio-N6-(dimethylallyl)adenosine (ms(2)i(6)A) at position 37 in tRNAs that read codons beginning with uridine. This chain is tRNA-2-methylthio-N(6)-dimethylallyladenosine synthase, found in Koribacter versatilis (strain Ellin345).